A 270-amino-acid chain; its full sequence is 4-hydroxy-tetrahydrodipicolinate reductase (270 aa).

NAD(+)-binding positions include 9-14 (GAGGRM) and Glu35. Arg36 contacts NADP(+). NAD(+) is bound by residues 99-101 (GTT) and 123-126 (ASNY). His156 acts as the Proton donor/acceptor in catalysis. His157 provides a ligand contact to (S)-2,3,4,5-tetrahydrodipicolinate. The Proton donor role is filled by Lys160. 166–167 (GT) is a binding site for (S)-2,3,4,5-tetrahydrodipicolinate.

Belongs to the DapB family.

Its subcellular location is the cytoplasm. It catalyses the reaction (S)-2,3,4,5-tetrahydrodipicolinate + NAD(+) + H2O = (2S,4S)-4-hydroxy-2,3,4,5-tetrahydrodipicolinate + NADH + H(+). The catalysed reaction is (S)-2,3,4,5-tetrahydrodipicolinate + NADP(+) + H2O = (2S,4S)-4-hydroxy-2,3,4,5-tetrahydrodipicolinate + NADPH + H(+). It functions in the pathway amino-acid biosynthesis; L-lysine biosynthesis via DAP pathway; (S)-tetrahydrodipicolinate from L-aspartate: step 4/4. In terms of biological role, catalyzes the conversion of 4-hydroxy-tetrahydrodipicolinate (HTPA) to tetrahydrodipicolinate. The sequence is that of 4-hydroxy-tetrahydrodipicolinate reductase from Mannheimia succiniciproducens (strain KCTC 0769BP / MBEL55E).